We begin with the raw amino-acid sequence, 424 residues long: GTPase Obg (424 aa).

The region spanning 1–158 (MFIDTAKIFV…RWIKLELKLL (158 aa)) is the Obg domain. Positions 159-331 (ADVGLIGFPN…LMKEAARLLS (173 aa)) constitute an OBG-type G domain. GTP-binding positions include 165-172 (GFPNVGKS), 190-194 (FTTLK), 212-215 (DIPG), 282-285 (NKSD), and 312-314 (SAA). Residues Ser172 and Thr192 each coordinate Mg(2+). The 80-residue stretch at 345 to 424 (RFIEEEKRFT…LNDFEFDFLL (80 aa)) folds into the OCT domain.

The protein belongs to the TRAFAC class OBG-HflX-like GTPase superfamily. OBG GTPase family. As to quaternary structure, monomer. The cofactor is Mg(2+).

Its subcellular location is the cytoplasm. Its function is as follows. An essential GTPase which binds GTP, GDP and possibly (p)ppGpp with moderate affinity, with high nucleotide exchange rates and a fairly low GTP hydrolysis rate. Plays a role in control of the cell cycle, stress response, ribosome biogenesis and in those bacteria that undergo differentiation, in morphogenesis control. This chain is GTPase Obg, found in Clostridium botulinum (strain ATCC 19397 / Type A).